The sequence spans 380 residues: Cytochrome b (380 aa).

Helical transmembrane passes span 34 to 54, 78 to 99, 114 to 134, and 179 to 199; these read FGSL…FLAM, WLIR…YLHI, WNIG…GYVL, and FFTF…IHLL. Heme b-binding residues include histidine 84 and histidine 98. Residues histidine 183 and histidine 197 each contribute to the heme b site. Histidine 202 contacts a ubiquinone. The next 4 membrane-spanning stretches (helical) occupy residues 227–247, 289–309, 321–341, and 348–368; these read YKDL…ALFT, LGGV…PILH, ITQI…WIGG, and FITI…ILFP.

It belongs to the cytochrome b family. The cytochrome bc1 complex contains 3 respiratory subunits (MT-CYB, CYC1 and UQCRFS1), 2 core proteins (UQCRC1 and UQCRC2) and probably 6 low-molecular weight proteins. Requires heme b as cofactor.

Its subcellular location is the mitochondrion inner membrane. Component of the ubiquinol-cytochrome c reductase complex (complex III or cytochrome b-c1 complex) that is part of the mitochondrial respiratory chain. The b-c1 complex mediates electron transfer from ubiquinol to cytochrome c. Contributes to the generation of a proton gradient across the mitochondrial membrane that is then used for ATP synthesis. The chain is Cytochrome b (mt-cyb) from Hemitrygon laosensis (Mekong freshwater stingray).